A 242-amino-acid chain; its full sequence is Probable transcriptional regulatory protein BURPS1710b_1385 (242 aa).

The protein belongs to the TACO1 family.

It localises to the cytoplasm. The chain is Probable transcriptional regulatory protein BURPS1710b_1385 from Burkholderia pseudomallei (strain 1710b).